We begin with the raw amino-acid sequence, 734 residues long: Myb-like protein J (734 aa).

3 disordered regions span residues 1-35 (MPNNQQNQIESPSKNTSNVGGSTLLNNNSPPFKSN), 128-196 (QKDQ…PTMM), and 221-378 (SPIS…LKQG). Basic and acidic residues predominate over residues 131–142 (QQQKEQQKEQQK). The span at 164–173 (TTTTTTTTTT) shows a compositional bias: low complexity. Over residues 174–196 (AVEQQGAEQQDTNLNSTSSPTMM) the composition is skewed to polar residues. Over residues 221-230 (SPISSSLNNS) the composition is skewed to low complexity. A compositionally biased stretch (polar residues) spans 231 to 257 (QDNTKPVSPDNIENTSNPMDTSSSNGK). The span at 258-372 (TPTITPIVTP…GGKTNPTGKK (115 aa)) shows a compositional bias: low complexity. The HTH myb-type domain occupies 371–426 (KKTSLKQGWTKEEHIRFLNGIQIHGKGAWKEIAQFVGTRTPTQIQSHAQKYYLRQK). Positions 399-422 (WKEIAQFVGTRTPTQIQSHAQKYY) form a DNA-binding region, H-T-H motif. Residues 445-454 (DDNLNNSNKN) are compositionally biased toward low complexity. The disordered stretch occupies residues 445–623 (DDNLNNSNKN…GNILRHQNSH (179 aa)). Basic and acidic residues predominate over residues 455–468 (NVDKNKQDDKEKKT). Basic residues predominate over residues 469 to 478 (QKTKKTKSKS). Low complexity-rich tracts occupy residues 489 to 543 (QQQQ…SSQT) and 574 to 615 (NNNN…NEGN).

It is found in the nucleus. This Dictyostelium discoideum (Social amoeba) protein is Myb-like protein J (mybJ).